The primary structure comprises 521 residues: GMP synthase [glutamine-hydrolyzing] (521 aa).

A Glutamine amidotransferase type-1 domain is found at 5 to 197 (KILILDFGSQ…VLDICGAQPG (193 aa)). Cys-81 (nucleophile) is an active-site residue. Active-site residues include His-171 and Glu-173. A GMPS ATP-PPase domain is found at 198-390 (WTMPNYIEEA…LGLPREMVYR (193 aa)). 225 to 231 (SGGVDSS) is a binding site for ATP.

In terms of assembly, homodimer.

It catalyses the reaction XMP + L-glutamine + ATP + H2O = GMP + L-glutamate + AMP + diphosphate + 2 H(+). It participates in purine metabolism; GMP biosynthesis; GMP from XMP (L-Gln route): step 1/1. Functionally, catalyzes the synthesis of GMP from XMP. This chain is GMP synthase [glutamine-hydrolyzing] (guaA), found in Neisseria meningitidis serogroup A / serotype 4A (strain DSM 15465 / Z2491).